Consider the following 181-residue polypeptide: MFTRAVSRLSRKRPPSDIHDGDGSSSSGHQSLKSTAKWASSLENLLEDPEGVQRFREFLKKEFSEENVLFWLACEDFKKTEDRKQMQEKAKEIYMTFLSNKASSQVNVEGQSRLTEKILEEPHPLMFQKLQDQIFNLMKYDSYSRFLKSDLFLKPKRTEEEEEEPPDAQTAAKRASRIYNT.

A disordered region spans residues 1–35 (MFTRAVSRLSRKRPPSDIHDGDGSSSSGHQSLKST). A phosphoserine mark is found at Ser-24 and Ser-41. In terms of domain architecture, RGS spans 41-156 (SLENLLEDPE…LKSDLFLKPK (116 aa)). Cys-74 carries the S-palmitoyl cysteine lipid modification. The interval 155-181 (PKRTEEEEEEPPDAQTAAKRASRIYNT) is disordered. Ser-176 is subject to Phosphoserine.

Interacts with GNAZ, GNAI1 and GNAI3. Associates specifically with the activated, GTP-bound forms of GNAZ and GNAI3.

It is found in the cytoplasm. The protein localises to the cytosol. It localises to the nucleus. Functionally, regulates G protein-coupled receptor signaling cascades, including signaling downstream of the muscarinic acetylcholine receptor CHRM2. Inhibits signal transduction by increasing the GTPase activity of G protein alpha subunits, thereby driving them into their inactive GDP-bound form. Modulates the activity of potassium channels that are activated in response to CHRM2 signaling. Activity on GNAZ is inhibited by palmitoylation of the G-protein. In Mus musculus (Mouse), this protein is Regulator of G-protein signaling 10 (Rgs10).